We begin with the raw amino-acid sequence, 1202 residues long: Caskin-2 (1202 aa).

6 ANK repeats span residues 48–77, 81–110, 114–143, 147–176, 188–217, and 220–249; these read DGFS…TVDI, NGMR…AVNA, DGQI…NPCL, AKKT…CVAL, NYTT…EINR, and KTGT…DVNI. The residue at position 253 (Tyr-253) is a Phosphotyrosine. One can recognise an SH3 domain in the interval 281–347; sequence SGILKVRALK…PPGIVEVVSK (67 aa). Positions 355–460 are disordered; that stretch reads RLPSAPTPLR…GLHPPSLADN (106 aa). Phosphoserine is present on residues Ser-358, Ser-393, Ser-396, Ser-403, Ser-406, and Ser-409. Residues 415–425 show a composition bias toward polar residues; it reads SAGSGQSSEGT. The residue at position 471 (Ser-471) is a Phosphoserine. 2 SAM domains span residues 489–552 and 558–622; these read KDAQ…LSIA and YIPT…LAEL. Disordered regions lie at residues 676 to 1104 and 1116 to 1181; these read LQAA…APKP and GPKL…STKH. Ser-725 carries the post-translational modification Phosphoserine. A compositionally biased stretch (basic and acidic residues) spans 731 to 740; that stretch reads NLPEGTERPP. Residues 765-774 show a composition bias toward pro residues; the sequence is SPAPGPPPGA. Phosphoserine is present on residues Ser-858, Ser-877, Ser-878, and Ser-892. Residues 913–923 are compositionally biased toward pro residues; sequence PSEPPGPPAPA. A compositionally biased stretch (low complexity) spans 940–949; it reads PPSRGSSGEG. Pro residues-rich tracts occupy residues 966–978 and 1018–1030; these read PAGP…PVPP and PAAP…PGES. The span at 1031-1051 shows a compositional bias: low complexity; the sequence is PPASSLPQPEPSSLPAQGVPT. Composition is skewed to pro residues over residues 1052-1068 and 1124-1133; these read PLAP…PCPG and GPRPVPPPRP. Residues 1135 to 1151 show a composition bias toward polar residues; the sequence is STGTVGPGQAQQRLEQT. Residues 1161–1172 show a composition bias toward basic and acidic residues; sequence AAEKSIGTKEQE.

In terms of assembly, may not bind CASK.

The protein localises to the cytoplasm. In Homo sapiens (Human), this protein is Caskin-2 (CASKIN2).